A 343-amino-acid polypeptide reads, in one-letter code: UDP-N-acetylglucosamine--N-acetylmuramyl-(pentapeptide) pyrophosphoryl-undecaprenol N-acetylglucosamine transferase (343 aa).

UDP-N-acetyl-alpha-D-glucosamine-binding positions include T10–G12, N113, S174, and Q275.

Belongs to the glycosyltransferase 28 family. MurG subfamily.

Its subcellular location is the cell membrane. It carries out the reaction di-trans,octa-cis-undecaprenyl diphospho-N-acetyl-alpha-D-muramoyl-L-alanyl-D-glutamyl-meso-2,6-diaminopimeloyl-D-alanyl-D-alanine + UDP-N-acetyl-alpha-D-glucosamine = di-trans,octa-cis-undecaprenyl diphospho-[N-acetyl-alpha-D-glucosaminyl-(1-&gt;4)]-N-acetyl-alpha-D-muramoyl-L-alanyl-D-glutamyl-meso-2,6-diaminopimeloyl-D-alanyl-D-alanine + UDP + H(+). The protein operates within cell wall biogenesis; peptidoglycan biosynthesis. Its function is as follows. Cell wall formation. Catalyzes the transfer of a GlcNAc subunit on undecaprenyl-pyrophosphoryl-MurNAc-pentapeptide (lipid intermediate I) to form undecaprenyl-pyrophosphoryl-MurNAc-(pentapeptide)GlcNAc (lipid intermediate II). This is UDP-N-acetylglucosamine--N-acetylmuramyl-(pentapeptide) pyrophosphoryl-undecaprenol N-acetylglucosamine transferase from Wolbachia sp. subsp. Drosophila simulans (strain wRi).